Consider the following 326-residue polypeptide: Deoxyuridine 5'-triphosphate nucleotidohydrolase (326 aa).

Residues 218–220 (RSS) and 321–322 (FG) each bind substrate.

This sequence belongs to the dUTPase family. It depends on Mg(2+) as a cofactor.

The catalysed reaction is dUTP + H2O = dUMP + diphosphate + H(+). Involved in nucleotide metabolism: produces dUMP, the immediate precursor of thymidine nucleotides and decreases the intracellular concentration of dUTP to avoid uracil incorporation into viral DNA. This is Deoxyuridine 5'-triphosphate nucleotidohydrolase from Equus caballus (Horse).